Reading from the N-terminus, the 369-residue chain is Maltose/maltodextrin import ATP-binding protein MalK (369 aa).

In terms of domain architecture, ABC transporter spans 4 to 234; that stretch reads VQLRNVTKAW…PADRFVAGFI (231 aa). 36 to 43 is a binding site for ATP; it reads GPSGCGKS.

It belongs to the ABC transporter superfamily. Maltooligosaccharide importer (TC 3.A.1.1.1) family. As to quaternary structure, the complex is composed of two ATP-binding proteins (MalK), two transmembrane proteins (MalG and MalK) and a solute-binding protein (MalE).

The protein localises to the cell inner membrane. The catalysed reaction is D-maltose(out) + ATP + H2O = D-maltose(in) + ADP + phosphate + H(+). Part of the ABC transporter complex MalEFGK involved in maltose/maltodextrin import. Responsible for energy coupling to the transport system. In Salmonella choleraesuis (strain SC-B67), this protein is Maltose/maltodextrin import ATP-binding protein MalK.